The following is a 79-amino-acid chain: D-alanyl carrier protein (79 aa).

Residues 1-77 (MTVEEKIIDA…KIVEGVKELQ (77 aa)) form the Carrier domain. The residue at position 35 (serine 35) is an O-(pantetheine 4'-phosphoryl)serine.

It belongs to the DltC family. Post-translationally, 4'-phosphopantetheine is transferred from CoA to a specific serine of apo-DCP.

The protein resides in the cytoplasm. Its pathway is cell wall biogenesis; lipoteichoic acid biosynthesis. Carrier protein involved in the D-alanylation of lipoteichoic acid (LTA). The loading of thioester-linked D-alanine onto DltC is catalyzed by D-alanine--D-alanyl carrier protein ligase DltA. The DltC-carried D-alanyl group is further transferred to cell membrane phosphatidylglycerol (PG) by forming an ester bond, probably catalyzed by DltD. D-alanylation of LTA plays an important role in modulating the properties of the cell wall in Gram-positive bacteria, influencing the net charge of the cell wall. The chain is D-alanyl carrier protein from Streptococcus uberis (strain ATCC BAA-854 / 0140J).